We begin with the raw amino-acid sequence, 217 residues long: Ras-related protein Rab-39A (217 aa).

The GTP site is built by Ser17, Gly20, Lys21, Ser22, Cys23, and Thr44. Ser22 contributes to the Mg(2+) binding site. Positions 39–47 (PACDPTVGV) are switch-I. Positions 44 and 68 each coordinate Mg(2+). Gly71, His127, Lys128, Asp130, Ala158, and Lys159 together coordinate GTP. A switch-II region spans residues 71–87 (GQERFRSITRSYYRNSV). 2 S-geranylgeranyl cysteine lipidation sites follow: Cys215 and Cys217. Position 217 is a cysteine methyl ester (Cys217).

This sequence belongs to the small GTPase superfamily. Rab family. In terms of assembly, interacts (GDP-bound) with C9orf72; C9orf72 acts as a GEF for RAB39A. Interacts (GTP-bound) with HOPS complex components VPS39 and VPS41, and STX17; interaction between HOPS components and RAB39A contributes to obtaining a functional HOPS complex that promotes membrane fusion driven by STX17-SNAP29-VAMP8. Interacts with BECN1. Probably associates with the PI3K (PI3KC3/PI3K-III/class III phosphatidylinositol 3-kinase) complex. Interacts with UACA. Interacts with isoform a of RASSF1. Does not interact with isoform c of RASSF1. The cofactor is Mg(2+). In terms of processing, prenylated. Prenylation is required for association with cellular membranes.

It is found in the cell membrane. The protein localises to the cytoplasmic vesicle. The protein resides in the phagosome membrane. It localises to the lysosome membrane. Its subcellular location is the autolysosome membrane. It catalyses the reaction GTP + H2O = GDP + phosphate + H(+). Regulated by guanine nucleotide exchange factors (GEFs) including c9Orf72, which promote the exchange of bound GDP for free GTP. Regulated by GTPase activating proteins (GAPs) which increase the GTP hydrolysis activity. Inhibited by GDP dissociation inhibitors (GDIs). The small GTPases Rab are key regulators of intracellular membrane trafficking, from the formation of transport vesicles to their fusion with membranes. Rabs cycle between an inactive GDP-bound form and an active GTP-bound form that is able to recruit to membranes different sets of downstream effectors directly responsible for vesicle formation, movement, tethering and fusion. RAB39A regulates autophagosome-lysosome fusion via recruitment of the HOPS endosomal tethering complex onto lysosomes; this process involves lysosomal RAB39A and autophagosomal RAB2A recruitment of HOPS subcomplexes VPS41-VPS16-VPS18-VPS33A and VPS39-VPS11, respectively, which assemble into a functional complex to mediate membrane tethering and SNAREs-driven membrane fusion. Also negatively regulates lipopolysaccharide (LPS)-induced autophagosome formation in macrophages, possibly by implicating PI3K. Promotes the delivery of MHC-I molecules from the ER to phagosomes and the generation of peptide-loaded MHC-I complexes in phagosomes, thus enhancing antigen cross-presentation by dendritic cells. Plays a role in the maturation and acidification of phagosomes that engulf pathogens, such as S.aureus and M.tuberculosis. Plays a role in the fusion of phagosomes with lysosomes. May be involved in multiple neurite formation. The protein is Ras-related protein Rab-39A of Homo sapiens (Human).